A 244-amino-acid chain; its full sequence is Sepiapterin reductase (244 aa).

Residues 9–15 (GAGKGIG), 40–42 (SRT), 66–67 (DI), and Asn93 each bind NADP(+). Phe99 lines the substrate pocket. Thr116 provides a ligand contact to NADP(+). Residues Ser145 and Tyr158 each coordinate substrate. NADP(+) is bound by residues Tyr158, Lys162, and 191–196 (VYTPMW). Trp196 is a binding site for substrate.

Belongs to the short-chain dehydrogenases/reductases (SDR) family. In terms of assembly, homodimer.

It is found in the cytoplasm. It catalyses the reaction L-threo-7,8-dihydrobiopterin + NADP(+) = L-sepiapterin + NADPH + H(+). It carries out the reaction L-threo-tetrahydrobiopterin + 2 NADP(+) = 6-pyruvoyl-5,6,7,8-tetrahydropterin + 2 NADPH + 2 H(+). Slightly inhibited by N-acetyldopamine but not by N-acetylserotonin or melatonin. Its function is as follows. Catalyzes the final reductions in tetra-hydrobiopterin biosynthesis to form 5,6,7,8-tetrahydrobiopterin. The chain is Sepiapterin reductase from Chlorobaculum tepidum (strain ATCC 49652 / DSM 12025 / NBRC 103806 / TLS) (Chlorobium tepidum).